The primary structure comprises 56 residues: Large ribosomal subunit protein bL33 (56 aa).

The protein belongs to the bacterial ribosomal protein bL33 family.

The protein is Large ribosomal subunit protein bL33 of Vibrio campbellii (strain ATCC BAA-1116).